Consider the following 434-residue polypeptide: MKKTHITEQKFADLGLEPQVLDGLNAKGFINCTPIQAKALPVLLAGQDIAGQAQTGTGKTLAFLAATFNHLLTTPAPEGRKITQPRAIIMAPTRELAIQIYNDAESLIASTGLKAALAYGGERYEKQQKVIEAGVDILIGTTGRIIDFYKQGQIDFKAIQVVVLDEADRMFDLGFIKDIRFVFRRMPAPAERLNMLFSATLSYRVQELAFEHMQEPEHVVVEPDQKTGHLITEELFYPSNDHKMALLQTLIEEEWPDRAIIFANTKHKCELVWGHLAADKHRVGLLTGDVPQKKRERILEEFTKGEVDILVATDVAARGLHIPQVTHVFNFDLPNEAEDYVHRIGRTGRAGESGNSISFACEEYAINLPAIEEYIEHSIPQSDYDTSALLEDLPAPIRLQRRPPQNRRNGSNNGQRQSGNRKHSRPRPPRSPQA.

The short motif at 9–37 is the Q motif element; that stretch reads QKFADLGLEPQVLDGLNAKGFINCTPIQA. Positions 40-219 constitute a Helicase ATP-binding domain; the sequence is LPVLLAGQDI…FEHMQEPEHV (180 aa). 53 to 60 provides a ligand contact to ATP; the sequence is AQTGTGKT. The DEAD box motif lies at 165–168; the sequence is DEAD. Residues 245-390 form the Helicase C-terminal domain; the sequence is ALLQTLIEEE…QSDYDTSALL (146 aa). The segment at 394 to 434 is disordered; that stretch reads PAPIRLQRRPPQNRRNGSNNGQRQSGNRKHSRPRPPRSPQA. Residues 406–418 are compositionally biased toward low complexity; that stretch reads NRRNGSNNGQRQS. A compositionally biased stretch (basic residues) spans 419-428; that stretch reads GNRKHSRPRP.

This sequence belongs to the DEAD box helicase family. RhlB subfamily. Component of the RNA degradosome, which is a multiprotein complex involved in RNA processing and mRNA degradation.

Its subcellular location is the cytoplasm. It carries out the reaction ATP + H2O = ADP + phosphate + H(+). Its function is as follows. DEAD-box RNA helicase involved in RNA degradation. Has RNA-dependent ATPase activity and unwinds double-stranded RNA. This Aliivibrio salmonicida (strain LFI1238) (Vibrio salmonicida (strain LFI1238)) protein is ATP-dependent RNA helicase RhlB.